The following is a 504-amino-acid chain: Xylose import ATP-binding protein XylG (504 aa).

ABC transporter domains are found at residues 6-243 (LEMK…VGRE) and 260-504 (LKVD…TGGK). 38-45 (GENGAGKS) lines the ATP pocket.

Belongs to the ABC transporter superfamily. Xylose importer (TC 3.A.1.2.4) family. As to quaternary structure, the complex is composed of two ATP-binding proteins (XylG), two transmembrane proteins (XylH) and a solute-binding protein (XylF).

Its subcellular location is the cell membrane. The enzyme catalyses D-xylose(out) + ATP + H2O = D-xylose(in) + ADP + phosphate + H(+). Its function is as follows. Part of the ABC transporter complex XylFGH involved in xylose import. Responsible for energy coupling to the transport system. This chain is Xylose import ATP-binding protein XylG, found in Geobacillus kaustophilus (strain HTA426).